Consider the following 137-residue polypeptide: Actin-depolymerizing factor 7 (137 aa).

The residue at position 6 (serine 6) is a Phosphoserine. In terms of domain architecture, ADF-H spans 7–137 (GMAVEDECKL…SFDIIKSRAL (131 aa)).

The protein belongs to the actin-binding proteins ADF family. As to expression, specifically expressed in pollen.

The protein resides in the cytoplasm. It localises to the cytoskeleton. In terms of biological role, actin-depolymerizing protein. Severs actin filaments (F-actin) and binds to actin monomers. Binds monomeric actin (G-actin) with a marked preference for the ADP-loaded form and inhibits the rate of nucleotide exchange on G-actin. Required for pollen tube growth. Promotes turnover of longitudinal actin cables by severing actin filaments in pollen tubes. In Arabidopsis thaliana (Mouse-ear cress), this protein is Actin-depolymerizing factor 7 (ADF7).